We begin with the raw amino-acid sequence, 219 residues long: Leucyl/phenylalanyl-tRNA--protein transferase (219 aa).

It belongs to the L/F-transferase family.

The protein resides in the cytoplasm. The catalysed reaction is N-terminal L-lysyl-[protein] + L-leucyl-tRNA(Leu) = N-terminal L-leucyl-L-lysyl-[protein] + tRNA(Leu) + H(+). It catalyses the reaction N-terminal L-arginyl-[protein] + L-leucyl-tRNA(Leu) = N-terminal L-leucyl-L-arginyl-[protein] + tRNA(Leu) + H(+). The enzyme catalyses L-phenylalanyl-tRNA(Phe) + an N-terminal L-alpha-aminoacyl-[protein] = an N-terminal L-phenylalanyl-L-alpha-aminoacyl-[protein] + tRNA(Phe). Functions in the N-end rule pathway of protein degradation where it conjugates Leu, Phe and, less efficiently, Met from aminoacyl-tRNAs to the N-termini of proteins containing an N-terminal arginine or lysine. In Leptospira borgpetersenii serovar Hardjo-bovis (strain JB197), this protein is Leucyl/phenylalanyl-tRNA--protein transferase.